Reading from the N-terminus, the 457-residue chain is ATP synthase subunit beta (457 aa).

147–154 lines the ATP pocket; sequence GGAGVGKT.

This sequence belongs to the ATPase alpha/beta chains family. As to quaternary structure, F-type ATPases have 2 components, CF(1) - the catalytic core - and CF(0) - the membrane proton channel. CF(1) has five subunits: alpha(3), beta(3), gamma(1), delta(1), epsilon(1). CF(0) has three main subunits: a(1), b(2) and c(9-12). The alpha and beta chains form an alternating ring which encloses part of the gamma chain. CF(1) is attached to CF(0) by a central stalk formed by the gamma and epsilon chains, while a peripheral stalk is formed by the delta and b chains.

It is found in the cell inner membrane. It catalyses the reaction ATP + H2O + 4 H(+)(in) = ADP + phosphate + 5 H(+)(out). Functionally, produces ATP from ADP in the presence of a proton gradient across the membrane. The catalytic sites are hosted primarily by the beta subunits. In Histophilus somni (strain 2336) (Haemophilus somnus), this protein is ATP synthase subunit beta.